Here is a 99-residue protein sequence, read N- to C-terminus: Small ribosomal subunit protein bS20 (99 aa).

The protein belongs to the bacterial ribosomal protein bS20 family.

In terms of biological role, binds directly to 16S ribosomal RNA. The sequence is that of Small ribosomal subunit protein bS20 from Thermotoga neapolitana (strain ATCC 49049 / DSM 4359 / NBRC 107923 / NS-E).